The following is a 316-amino-acid chain: Pantothenate kinase (316 aa).

ATP is bound at residue 95 to 102 (GSVAVGKS).

The protein belongs to the prokaryotic pantothenate kinase family.

It localises to the cytoplasm. It catalyses the reaction (R)-pantothenate + ATP = (R)-4'-phosphopantothenate + ADP + H(+). Its pathway is cofactor biosynthesis; coenzyme A biosynthesis; CoA from (R)-pantothenate: step 1/5. The protein is Pantothenate kinase of Shigella dysenteriae serotype 1 (strain Sd197).